The following is a 275-amino-acid chain: Echotoxin-2 (275 aa).

The first 23 residues, 1 to 23, serve as a signal peptide directing secretion; sequence MKRNILALVVVVALISQSRPAES. Positions 23–32 are plays an important role in the hemolytic activity; sequence SAGGTIIATL. Positions 49–67 are N-terminal region; the sequence is ETGASVASAAAAATSSDYS. Positions 123, 141, 143, 176, and 177 each coordinate phosphocholine. Residues 141–156 are trp-rich region, which is important for the binding to lipid membrane; that stretch reads SAPYNFDFYSNWLAVG. The propeptide occupies 249–275; that stretch reads RAIQQELARRAEEEKQRKRKALDEMLK.

This sequence belongs to the actinoporin family. Sea anemone subfamily. In terms of assembly, octamer or nonamer in membranes. Monomer in the soluble state. As to expression, salivary gland.

It is found in the secreted. Its subcellular location is the nematocyst. The protein localises to the target cell membrane. Functionally, pore-forming protein that forms cations-selective hydrophilic pores of around 1 nm and causes cardiac stimulation and cytolysis. Pore formation is a multi-step process that involves specific recognition of membrane sphingomyelin (but neither cholesterol nor phosphatidylcholine) using aromatic rich region and adjacent phosphocholine (POC) binding site, firm binding to the membrane (mainly driven by hydrophobic interactions) accompanied by the transfer of the N-terminal region to the lipid-water interface and finally pore formation after oligomerization of monomers. Exhibits both hemolytic and lethal activities. Gangliosides potently inhibits the hemolytic activity. The polypeptide is Echotoxin-2 (Monoplex parthenopeus (Giant triton)).